The chain runs to 453 residues: MFSKLAANFAQRAAGSAAGTTRRVAFQTRFVSSQTLANGSKGRAIPFQKPGSVPATFTIRDGPVFRGKAFGANANISGEAVFTTSLVGYPESMTDPSYRGQILVFTQPLIGNYGVPSNERDEYNLLKYFESPHIQCAGVVVSDVALNYSHWTAVESLSEWCAREASPPSPASDTRAIVTHLREQGSSLARISIGDEYDADEDESFVDPGQINLVKRVSTKAPFVIESPGADLHVALIDCGVKENILRQLVSRGASLTVFPYNYPIHKVADHFDGVFISNGPGDPIHCQETVYNLARLMETSSIPIMGICLGHQLLAMAVGAKTIKMKYGNRAHNIPALDLTTGQCHITSQNHGYAVDASTLPNDFKEYFVNLNDGSNEGMMHRTRPIFSTQFHPEAKGGPMDSSYLFEKYLENVRAAKSAQRVYKDNRPSQYVLDVLSKERVGVEPVPLVGFA.

A mitochondrion-targeting transit peptide spans 1–13; sequence MFSKLAANFAQRA. The 188-residue stretch at 233–420 folds into the Glutamine amidotransferase type-1 domain; sequence HVALIDCGVK…LENVRAAKSA (188 aa). Cysteine 309 functions as the Nucleophile in the catalytic mechanism. Residues histidine 393 and glutamate 395 contribute to the active site.

Belongs to the CarA family. As to quaternary structure, heterodimer composed of 2 chains; the small (or glutamine) chain promotes the hydrolysis of glutamine to ammonia, which is used by the large (or ammonia) chain to synthesize carbamoyl phosphate.

The protein localises to the mitochondrion matrix. The enzyme catalyses hydrogencarbonate + L-glutamine + 2 ATP + H2O = carbamoyl phosphate + L-glutamate + 2 ADP + phosphate + 2 H(+). The catalysed reaction is L-glutamine + H2O = L-glutamate + NH4(+). The protein operates within amino-acid biosynthesis; L-arginine biosynthesis; carbamoyl phosphate from bicarbonate: step 1/1. Functionally, small subunit of the arginine-specific carbamoyl phosphate synthase (CPSase). CPSase catalyzes the formation of carbamoyl phosphate from the ammonia moiety of glutamine, carbonate, and phosphate donated by ATP, the first step of the arginine biosynthetic pathway. The small subunit (glutamine amidotransferase) binds and cleaves glutamine to supply the large subunit with the substrate ammonia. In Hypocrea virens (Gliocladium virens), this protein is Carbamoyl phosphate synthase arginine-specific small chain (cpa1).